We begin with the raw amino-acid sequence, 339 residues long: DNA double-strand break repair nuclease NurA (339 aa).

Asp-58 and Asp-133 together coordinate Mn(2+).

This sequence belongs to the NurA family. Homodimer. Forms a complex with HerA. The cofactor is Mn(2+).

Nuclease activity requires the presence of HerA. Another report shows endo- and exonuclease activity in the absence of HerA; HerA stimulates the exo- but not endonuclease. LhrC-Core (Hel112) inhibits the exonuclease activity of the HerA-NurA complex on ss- and dsDNA, has no effect on the nicking activity of NurA. Endo- and exonuclease activities are inhibited by ATP; ATP may subtract divalent ions from the reaction preventing nuclease activity, HerA can alleviate ATP inhibition. Functionally, involved in DNA double-strand break (DSB) repair. Probably acts with HerA to stimulate resection of the 5' strand and produce the long 3' single-strand that is required for RadA loading. NurA and HerA together stimulate the end-resection of six nucleotides of a linear DNA substrate. Processes linear double-stranded (ds)DNA probes with 3' or 5' single-stranded overhangs or blunt ends. Has endonuclease activity on single-stranded (ss)DNA and nicking activity on dsDNA without HerA as well as 5'- and 3'-exonuclease activity on ssDNA. Binds ssDNA, dsDNA, forked and bubble DNA equally well. The sequence is that of DNA double-strand break repair nuclease NurA from Saccharolobus solfataricus (strain ATCC 35092 / DSM 1617 / JCM 11322 / P2) (Sulfolobus solfataricus).